A 636-amino-acid polypeptide reads, in one-letter code: Ubiquitin-activating enzyme E1-like (636 aa).

ATP-binding positions include 28 to 33, aspartate 52, 60 to 63, lysine 76, and 121 to 126; these read GAGGIG, NLNR, and DNLAAR. 2 residues coordinate Zn(2+): cysteine 162 and cysteine 165. Cysteine 177 serves as the catalytic Glycyl thioester intermediate. Residues cysteine 435 and cysteine 438 each contribute to the Zn(2+) site. The disordered stretch occupies residues 581–636; the sequence is DGIVILDDDEGEITIDAEPINGSKKRPVDTEISEAPSNKRTKLVNEPTNSDIVELD. A compositionally biased stretch (acidic residues) spans 586 to 595; that stretch reads LDDDEGEITI. Positions 619-622 match the Nuclear localization signal motif; sequence KRTK. A compositionally biased stretch (polar residues) spans 626–636; the sequence is EPTNSDIVELD.

Belongs to the ubiquitin-activating E1 family. As to quaternary structure, heterodimer of UBA2 and AOS1. The complex binds SMT3. In terms of processing, multiubiquitinated in vivo.

It localises to the nucleus. It functions in the pathway protein modification; protein sumoylation. Functionally, the dimeric enzyme acts as a SMT3 E1 ligase. It mediates ATP-dependent activation of SMT3 and formation of a thioester with a conserved cysteine residue on AOS1. The protein is Ubiquitin-activating enzyme E1-like (UBA2) of Saccharomyces cerevisiae (strain ATCC 204508 / S288c) (Baker's yeast).